We begin with the raw amino-acid sequence, 640 residues long: tRNA-dihydrouridine(47) synthase [NAD(P)(+)]-like (640 aa).

Polar residues predominate over residues 1–11 (MAESEGSNTEN). Disordered stretches follow at residues 1 to 23 (MAES…ENLD) and 43 to 123 (FIDA…HSQF). Residues 43-57 (FIDADGKDVTEKETC) show a composition bias toward basic and acidic residues. A compositionally biased stretch (polar residues) spans 58-72 (SELSLNDAENTTRTE). Residues 77–86 (PEAKRIKLDD) show a composition bias toward basic and acidic residues. Positions 104-120 (EKKRARGQNKSRPHMKH) are enriched in basic residues. 2 C3H1-type zinc fingers span residues 123–153 (FEEN…HDVA) and 161–191 (EDIR…HLGE). FMN-binding positions include 301–303 (PLT) and glutamine 355. Cysteine 386 functions as the Proton donor in the catalytic mechanism. FMN is bound by residues lysine 425, histidine 455, 487–489 (NGD), and 510–511 (AR).

This sequence belongs to the Dus family. Dus3 subfamily. The cofactor is FMN.

It catalyses the reaction 5,6-dihydrouridine(47) in tRNA + NAD(+) = uridine(47) in tRNA + NADH + H(+). The enzyme catalyses 5,6-dihydrouridine(47) in tRNA + NADP(+) = uridine(47) in tRNA + NADPH + H(+). The catalysed reaction is a 5,6-dihydrouridine in mRNA + NAD(+) = a uridine in mRNA + NADH + H(+). It carries out the reaction a 5,6-dihydrouridine in mRNA + NADP(+) = a uridine in mRNA + NADPH + H(+). In terms of biological role, catalyzes the synthesis of dihydrouridine, a modified base, in various RNAs, such as tRNAs, mRNAs and some long non-coding RNAs (lncRNAs). Mainly modifies the uridine in position 47 (U47) in the D-loop of most cytoplasmic tRNAs. Also able to mediate the formation of dihydrouridine in some mRNAs, thereby regulating their translation. This chain is tRNA-dihydrouridine(47) synthase [NAD(P)(+)]-like (dus3l), found in Xenopus laevis (African clawed frog).